The following is a 360-amino-acid chain: Photosystem II protein D1 3 (360 aa).

3 consecutive transmembrane segments (helical) span residues tyrosine 29 to isoleucine 46, histidine 118 to leucine 133, and tryptophan 142 to alanine 156. Residue histidine 118 coordinates chlorophyll a. Tyrosine 126 provides a ligand contact to pheophytin a. [CaMn4O5] cluster contacts are provided by aspartate 170 and glutamate 189. A helical membrane pass occupies residues phenylalanine 197–leucine 218. Chlorophyll a is bound at residue histidine 198. A quinone contacts are provided by residues histidine 215 and serine 264–phenylalanine 265. Position 215 (histidine 215) interacts with Fe cation. A Fe cation-binding site is contributed by histidine 272. A helical membrane pass occupies residues phenylalanine 274–leucine 288. Residues histidine 332, glutamate 333, aspartate 342, and alanine 344 each contribute to the [CaMn4O5] cluster site. Positions serine 345–serine 360 are excised as a propeptide.

The protein belongs to the reaction center PufL/M/PsbA/D family. PSII is composed of 1 copy each of membrane proteins PsbA, PsbB, PsbC, PsbD, PsbE, PsbF, PsbH, PsbI, PsbJ, PsbK, PsbL, PsbM, PsbT, PsbX, PsbY, PsbZ, Psb30/Ycf12, peripheral proteins PsbO, CyanoQ (PsbQ), PsbU, PsbV and a large number of cofactors. It forms dimeric complexes. The D1/D2 heterodimer binds P680, chlorophylls that are the primary electron donor of PSII, and subsequent electron acceptors. It shares a non-heme iron and each subunit binds pheophytin, quinone, additional chlorophylls, carotenoids and lipids. D1 provides most of the ligands for the Mn4-Ca-O5 cluster of the oxygen-evolving complex (OEC). There is also a Cl(-1) ion associated with D1 and D2, which is required for oxygen evolution. The PSII complex binds additional chlorophylls, carotenoids and specific lipids. is required as a cofactor. Tyr-161 forms a radical intermediate that is referred to as redox-active TyrZ, YZ or Y-Z. In terms of processing, C-terminally processed by CtpA; processing is essential to allow assembly of the oxygen-evolving complex and thus photosynthetic growth.

It is found in the cellular thylakoid membrane. It catalyses the reaction 2 a plastoquinone + 4 hnu + 2 H2O = 2 a plastoquinol + O2. Its function is as follows. Photosystem II (PSII) is a light-driven water:plastoquinone oxidoreductase that uses light energy to abstract electrons from H(2)O, generating O(2) and a proton gradient subsequently used for ATP formation. It consists of a core antenna complex that captures photons, and an electron transfer chain that converts photonic excitation into a charge separation. The D1/D2 (PsbA/PsbD) reaction center heterodimer binds P680, the primary electron donor of PSII as well as several subsequent electron acceptors. This Nostoc sp. (strain PCC 7120 / SAG 25.82 / UTEX 2576) protein is Photosystem II protein D1 3.